The primary structure comprises 359 residues: Endoglucanase (359 aa).

A signal peptide spans 1 to 23 (MPLRALVAVIVTTAVMLVPRAWA). Glu-53 functions as the Proton donor in the catalytic mechanism. Residue Asp-110 is the Nucleophile of the active site.

The protein belongs to the glycosyl hydrolase 8 (cellulase D) family.

It carries out the reaction Endohydrolysis of (1-&gt;4)-beta-D-glucosidic linkages in cellulose, lichenin and cereal beta-D-glucans.. Functionally, the biological conversion of cellulose to glucose generally requires three types of hydrolytic enzymes: (1) Endoglucanases which cut internal beta-1,4-glucosidic bonds; (2) Exocellobiohydrolases that cut the disaccharide cellobiose from the non-reducing end of the cellulose polymer chain; (3) Beta-1,4-glucosidases which hydrolyze the cellobiose and other short cello-oligosaccharides to glucose. This Cellulomonas uda protein is Endoglucanase.